The primary structure comprises 310 residues: Protoheme IX farnesyltransferase (310 aa).

Transmembrane regions (helical) follow at residues 30 to 47 (VTTLIVMTAWTGAFFGAA), 50 to 70 (GLPLVSWTLFHALLGIGLVSG), 102 to 122 (LGHGMVVSLVMMIGGAGYLGL), 126 to 146 (WLTAALALMTSVVYLMAYTPL), 152 to 172 (ICTTIGAFPGAMPPVLGWTAI), 181 to 201 (VALFAILFFWQFPHFHSIAWL), 228 to 248 (IVIYAAFLLPITLTPFLLRFA), 251 to 271 (IYFLAALVLGSMLFWVSLRMF), and 286 to 306 (ARQLLLASVTYLPLLFAVMML).

This sequence belongs to the UbiA prenyltransferase family. Protoheme IX farnesyltransferase subfamily.

The protein resides in the cell inner membrane. The enzyme catalyses heme b + (2E,6E)-farnesyl diphosphate + H2O = Fe(II)-heme o + diphosphate. Its pathway is porphyrin-containing compound metabolism; heme O biosynthesis; heme O from protoheme: step 1/1. Its function is as follows. Converts heme B (protoheme IX) to heme O by substitution of the vinyl group on carbon 2 of heme B porphyrin ring with a hydroxyethyl farnesyl side group. The polypeptide is Protoheme IX farnesyltransferase (Koribacter versatilis (strain Ellin345)).